Reading from the N-terminus, the 328-residue chain is Probable D,D-dipeptide transport ATP-binding protein DdpD (328 aa).

The 252-residue stretch at 6-257 (LDIQQLHLSF…PRHPYTIGLL (252 aa)) folds into the ABC transporter domain. An ATP-binding site is contributed by 42–49 (GESGSGKS).

Belongs to the ABC transporter superfamily. In terms of assembly, the complex is composed of two ATP-binding proteins (DdpD and DdpF), two transmembrane proteins (DdpB and DdpC) and a solute-binding protein (DdpA).

Its subcellular location is the cell inner membrane. Part of the ABC transporter complex DdpABCDF, which is probably involved in D,D-dipeptide transport. Probably responsible for energy coupling to the transport system. This Escherichia coli (strain K12) protein is Probable D,D-dipeptide transport ATP-binding protein DdpD.